A 545-amino-acid chain; its full sequence is CTP synthase (545 aa).

Positions 1–266 (MTTNYIFVTG…DDYICKRFGL (266 aa)) are amidoligase domain. Residue serine 14 participates in CTP binding. Serine 14 contributes to the UTP binding site. Residues 15-20 (SLGKGI) and aspartate 72 each bind ATP. Aspartate 72 and glutamate 140 together coordinate Mg(2+). Residues 147 to 149 (DIE), 187 to 192 (KTKPTQ), and lysine 223 contribute to the CTP site. UTP is bound by residues 187 to 192 (KTKPTQ) and lysine 223. 239–241 (KDV) is a binding site for ATP. Positions 291 to 542 (TIGMVGKYIA…VKAAGEYQKR (252 aa)) constitute a Glutamine amidotransferase type-1 domain. Glycine 352 is an L-glutamine binding site. Cysteine 379 functions as the Nucleophile; for glutamine hydrolysis in the catalytic mechanism. L-glutamine is bound by residues 380–383 (LGMQ), glutamate 403, and arginine 470. Active-site residues include histidine 515 and glutamate 517.

This sequence belongs to the CTP synthase family. Homotetramer.

It catalyses the reaction UTP + L-glutamine + ATP + H2O = CTP + L-glutamate + ADP + phosphate + 2 H(+). The catalysed reaction is L-glutamine + H2O = L-glutamate + NH4(+). It carries out the reaction UTP + NH4(+) + ATP = CTP + ADP + phosphate + 2 H(+). The protein operates within pyrimidine metabolism; CTP biosynthesis via de novo pathway; CTP from UDP: step 2/2. With respect to regulation, allosterically activated by GTP, when glutamine is the substrate; GTP has no effect on the reaction when ammonia is the substrate. The allosteric effector GTP functions by stabilizing the protein conformation that binds the tetrahedral intermediate(s) formed during glutamine hydrolysis. Inhibited by the product CTP, via allosteric rather than competitive inhibition. Functionally, catalyzes the ATP-dependent amination of UTP to CTP with either L-glutamine or ammonia as the source of nitrogen. Regulates intracellular CTP levels through interactions with the four ribonucleotide triphosphates. This is CTP synthase from Sodalis glossinidius (strain morsitans).